The following is a 106-amino-acid chain: uncharacterized protein (106 aa).

Residues 38–106 are disordered; it reads KGNKKSKAAT…STHLPYHGSY (69 aa). Composition is skewed to basic and acidic residues over residues 57–71 and 82–96; these read TRQE…HRPE and WKKE…KETS.

Its subcellular location is the mitochondrion. This is an uncharacterized protein from Arabidopsis thaliana (Mouse-ear cress).